Consider the following 565-residue polypeptide: Phosphoenolpyruvate-protein phosphotransferase (565 aa).

Catalysis depends on H191, which acts as the Tele-phosphohistidine intermediate. Phosphoenolpyruvate is bound by residues R289 and R325. Positions 427 and 451 each coordinate Mg(2+). Residues 450–451 (ND) and R461 contribute to the phosphoenolpyruvate site. C498 functions as the Proton donor in the catalytic mechanism.

This sequence belongs to the PEP-utilizing enzyme family. In terms of assembly, homodimer. Mg(2+) is required as a cofactor.

It is found in the cytoplasm. The catalysed reaction is L-histidyl-[protein] + phosphoenolpyruvate = N(pros)-phospho-L-histidyl-[protein] + pyruvate. Its function is as follows. General (non sugar-specific) component of the phosphoenolpyruvate-dependent sugar phosphotransferase system (sugar PTS). This major carbohydrate active-transport system catalyzes the phosphorylation of incoming sugar substrates concomitantly with their translocation across the cell membrane. Enzyme I transfers the phosphoryl group from phosphoenolpyruvate (PEP) to the phosphoryl carrier protein (HPr). This chain is Phosphoenolpyruvate-protein phosphotransferase (ptsI), found in Haloferax volcanii (strain ATCC 29605 / DSM 3757 / JCM 8879 / NBRC 14742 / NCIMB 2012 / VKM B-1768 / DS2) (Halobacterium volcanii).